The sequence spans 87 residues: Small ribosomal subunit protein uS17 (87 aa).

This sequence belongs to the universal ribosomal protein uS17 family. In terms of assembly, part of the 30S ribosomal subunit.

Functionally, one of the primary rRNA binding proteins, it binds specifically to the 5'-end of 16S ribosomal RNA. The chain is Small ribosomal subunit protein uS17 from Bacillus cytotoxicus (strain DSM 22905 / CIP 110041 / 391-98 / NVH 391-98).